A 365-amino-acid chain; its full sequence is 3-dehydroquinate synthase (365 aa).

NAD(+) contacts are provided by residues 107–111, 131–132, Lys-144, and Lys-153; these read GVIGD and TS. Residues Glu-186, His-251, and His-268 each coordinate Zn(2+).

This sequence belongs to the sugar phosphate cyclases superfamily. Dehydroquinate synthase family. Co(2+) serves as cofactor. The cofactor is Zn(2+). NAD(+) is required as a cofactor.

The protein localises to the cytoplasm. It carries out the reaction 7-phospho-2-dehydro-3-deoxy-D-arabino-heptonate = 3-dehydroquinate + phosphate. Its pathway is metabolic intermediate biosynthesis; chorismate biosynthesis; chorismate from D-erythrose 4-phosphate and phosphoenolpyruvate: step 2/7. Catalyzes the conversion of 3-deoxy-D-arabino-heptulosonate 7-phosphate (DAHP) to dehydroquinate (DHQ). This chain is 3-dehydroquinate synthase, found in Crocosphaera subtropica (strain ATCC 51142 / BH68) (Cyanothece sp. (strain ATCC 51142)).